The sequence spans 330 residues: Malate dehydrogenase (330 aa).

11–17 contributes to the NAD(+) binding site; the sequence is GGAGQIA. Residues arginine 92 and arginine 98 each contribute to the substrate site. NAD(+) contacts are provided by residues asparagine 105, glutamine 112, and 129–131; that span reads VGN. Residues asparagine 131 and arginine 162 each coordinate substrate. The active-site Proton acceptor is the histidine 187.

The protein belongs to the LDH/MDH superfamily. MDH type 2 family.

The enzyme catalyses (S)-malate + NAD(+) = oxaloacetate + NADH + H(+). In terms of biological role, catalyzes the reversible oxidation of malate to oxaloacetate. The polypeptide is Malate dehydrogenase (Protochlamydia amoebophila (strain UWE25)).